Consider the following 2256-residue polypeptide: Death-inducer obliterator 1 (2256 aa).

Methionine 1 carries the N-acetylmethionine modification. Residues 1–25 (MDDKGHLSNEEAPKAIKPTSKEFRK) show a composition bias toward basic and acidic residues. The disordered stretch occupies residues 1-256 (MDDKGHLSNE…NPREAGKPKP (256 aa)). Composition is skewed to polar residues over residues 48-59 (SEQQPQQHNLSL) and 96-119 (EPTSSTVTDVETASEGSVESSSEI). Residues serine 58 and serine 112 each carry the phosphoserine modification. A compositionally biased stretch (basic and acidic residues) spans 128 to 142 (LGKEHPASSEKAKGG). Residues 143–153 (EEEEDTSDSDS) show a composition bias toward acidic residues. Phosphothreonine is present on threonine 148. Phosphoserine occurs at positions 149 and 151. 2 consecutive short sequence motifs (nuclear localization signal) follow at residues 162–170 (QNRLRRKRE) and 182–190 (QNRLRKKRR). Residues 169-178 (REQEPVERSL) show a composition bias toward basic and acidic residues. 2 stretches are compositionally biased toward basic and acidic residues: residues 206–216 (EQDRPLCKQEP) and 246–256 (ENPREAGKPKP). The PHD-type zinc-finger motif lies at 265 to 319 (ALYCICRQPHNNRFMICCDRCEEWFHGDCVGISEARGRLLERNGEDYICPNCTIL). Disordered regions lie at residues 481–535 (LASR…DDRR), 598–624 (RPWPSATLSGTSARQAGPTPMTAASKK), 641–668 (ANVPAASPAPGRLGPVSPAPSQPNSQIR), 778–822 (SRTK…PEKS), 856–970 (QVPS…TALS), 1011–1039 (AKPSSSPDPRYLSVPPSPSISESRSPPEG), and 1197–1218 (PSSAGELDKTDEKRTRLQQEEL). The segment covering 495-506 (ESSTPSWASDHN) has biased composition (polar residues). Serine 522 is subject to Phosphoserine. Positions 667 to 787 (IRQNIRRSLK…SRTKLLNESK (121 aa)) constitute a TFIIS central domain. The segment covering 778 to 788 (SRTKLLNESKK) has biased composition (basic and acidic residues). Over residues 797–812 (PDMEDSPPVSDSEEQQ) the composition is skewed to acidic residues. Phosphoserine occurs at positions 802 and 806. Composition is skewed to basic and acidic residues over residues 875–886 (SKKEDFKPRHDS) and 921–935 (QERKCFPESPGDSHP). Lysine 876 participates in a covalent cross-link: Glycyl lysine isopeptide (Lys-Gly) (interchain with G-Cter in SUMO2). Position 886 is a phosphoserine (serine 886). A compositionally biased stretch (low complexity) spans 937-962 (PSSLGGLSPSSASGGSGVVTTVTMSG). Phosphoserine is present on residues serine 1016, serine 1027, and serine 1035. Basic and acidic residues predominate over residues 1202 to 1215 (ELDKTDEKRTRLQQ). Tyrosine 1239 carries the post-translational modification Phosphotyrosine. Residues 1245 to 1288 (DTAATSTTPPGSPPPPPPLPEPPVLKILSSLKPGSTSTVTAPTT) are disordered. At threonine 1252 the chain carries Phosphothreonine. Positions 1254–1267 (PGSPPPPPPLPEPP) are enriched in pro residues. A Phosphoserine modification is found at serine 1256. The segment covering 1279 to 1288 (STSTVTAPTT) has biased composition (low complexity). At serine 1307 the chain carries Phosphoserine. Disordered stretches follow at residues 1320–1347 (KKSFEPSGKESVGSTLSPHQDSKAKGED), 1362–1421 (FGQF…VAYD), 1509–1609 (SDAL…EAKE), and 1630–2256 (QKCE…AAQA). Residues 1371–1387 (LEEEEEDDRPYDPEEEY) are compositionally biased toward acidic residues. Serine 1514 bears the Phosphoserine mark. The segment covering 1526 to 1546 (LFSQEQQAPDPSQGAPNTNHN) has biased composition (polar residues). Residues 1547–1557 (LDSRQSRDPRQ) are compositionally biased toward basic and acidic residues. Positions 1649–1666 (PTAGDGAARPAPPRRVLL) are enriched in low complexity. Residues 1667–1679 (PTPPSTTFPPSFP) show a composition bias toward pro residues. The span at 1699-1712 (TFMSQETSLGSSQY) shows a compositional bias: polar residues. Serine 1726 carries the post-translational modification Phosphoserine. Over residues 1783 to 1792 (FPGPRGPVPP) the composition is skewed to pro residues. Position 1848 is an omega-N-methylarginine (arginine 1848). A compositionally biased stretch (basic and acidic residues) spans 1855 to 1869 (FEDRKDPHGEKREFQ). Residues arginine 1904, arginine 1905, arginine 1988, arginine 1993, arginine 2004, arginine 2019, and arginine 2035 each carry the asymmetric dimethylarginine modification. Composition is skewed to basic and acidic residues over residues 2081–2113 (EFREGKGHEYRSPAFEGRQRERFEAGSKEKPLD) and 2123–2246 (RQGR…EART).

Interacts specifically (via PHD-type zinc finger) with histone H3 that is trimethylated at 'Lys-4' (H3K4me3), histone phosphorylation at 'Thr-3' or 'Thr-6' disrupts this binding and promotes translocation of DIDO1 from chromatin to the mitotic spindle during mitosis. In terms of tissue distribution, ubiquitous. Expressed at intermediate levels.

The protein localises to the cytoplasm. It is found in the nucleus. The protein resides in the cytoskeleton. It localises to the spindle. Required for early embryonic stem cell development. Putative transcription factor, weakly pro-apoptotic when overexpressed. This Mus musculus (Mouse) protein is Death-inducer obliterator 1 (Dido1).